We begin with the raw amino-acid sequence, 143 residues long: Small ribosomal subunit protein uS9A (143 aa).

An N-acetylserine modification is found at S2. K30 is covalently cross-linked (Glycyl lysine isopeptide (Lys-Gly) (interchain with G-Cter in ubiquitin)). S34 is subject to Phosphoserine. Residues K47 and K59 each participate in a glycyl lysine isopeptide (Lys-Gly) (interchain with G-Cter in ubiquitin) cross-link. The residue at position 61 (S61) is a Phosphoserine. Phosphothreonine is present on T70. S76 is modified (phosphoserine). The disordered stretch occupies residues 123–143 (RPEPKKFGGKGARSRFQKSYR). Over residues 134–143 (ARSRFQKSYR) the composition is skewed to basic residues.

Belongs to the universal ribosomal protein uS9 family. As to quaternary structure, component of the small ribosomal subunit (SSU). Mature yeast ribosomes consist of a small (40S) and a large (60S) subunit. The 40S small subunit contains 1 molecule of ribosomal RNA (18S rRNA) and 33 different proteins (encoded by 57 genes). The large 60S subunit contains 3 rRNA molecules (25S, 5.8S and 5S rRNA) and 46 different proteins (encoded by 81 genes).

It localises to the cytoplasm. Its function is as follows. Component of the ribosome, a large ribonucleoprotein complex responsible for the synthesis of proteins in the cell. The small ribosomal subunit (SSU) binds messenger RNAs (mRNAs) and translates the encoded message by selecting cognate aminoacyl-transfer RNA (tRNA) molecules. The large subunit (LSU) contains the ribosomal catalytic site termed the peptidyl transferase center (PTC), which catalyzes the formation of peptide bonds, thereby polymerizing the amino acids delivered by tRNAs into a polypeptide chain. The nascent polypeptides leave the ribosome through a tunnel in the LSU and interact with protein factors that function in enzymatic processing, targeting, and the membrane insertion of nascent chains at the exit of the ribosomal tunnel. The chain is Small ribosomal subunit protein uS9A from Saccharomyces cerevisiae (strain ATCC 204508 / S288c) (Baker's yeast).